The sequence spans 218 residues: Oxygen regulatory protein NreC (218 aa).

Residues 2 to 119 form the Response regulatory domain; the sequence is KIVIADDHAV…QLILAVRTVY (118 aa). 4-aspartylphosphate is present on Asp53. Positions 149 to 214 constitute an HTH luxR-type domain; sequence SSDPFKILSK…ELVEYALKKK (66 aa). A DNA-binding region (H-T-H motif) is located at residues 173–192; sequence NKDIAEKLFVSVKTVEAHKT.

In terms of processing, phosphorylated by NreB.

It localises to the cytoplasm. Functionally, member of the two-component regulatory system NreB/NreC involved in the control of dissimilatory nitrate/nitrite reduction in response to oxygen. Phosphorylated NreC binds to a GC-rich palindromic sequence at the promoters of the nitrate (narGHJI) and nitrite (nir) reductase operons, as well as the putative nitrate transporter gene narT, and activates their expression. The sequence is that of Oxygen regulatory protein NreC (nreC) from Staphylococcus epidermidis (strain ATCC 35984 / DSM 28319 / BCRC 17069 / CCUG 31568 / BM 3577 / RP62A).